The sequence spans 363 residues: Isopentenyl-diphosphate delta-isomerase (363 aa).

15–16 (RK) provides a ligand contact to substrate. Residues Ser73, 74-76 (SMT), Ser104, and Asn133 contribute to the FMN site. Substrate is bound at residue 104-106 (SMR). Gln168 contacts substrate. Residue Glu169 participates in Mg(2+) binding. FMN-binding positions include Lys200, Thr230, and 313–314 (AG).

This sequence belongs to the IPP isomerase type 2 family. Homooctamer. Dimer of tetramers. It depends on FMN as a cofactor. The cofactor is NADPH. Mg(2+) serves as cofactor.

Its subcellular location is the cytoplasm. It catalyses the reaction isopentenyl diphosphate = dimethylallyl diphosphate. Functionally, involved in the biosynthesis of isoprenoids. Catalyzes the 1,3-allylic rearrangement of the homoallylic substrate isopentenyl (IPP) to its allylic isomer, dimethylallyl diphosphate (DMAPP). The sequence is that of Isopentenyl-diphosphate delta-isomerase from Chlorobium phaeobacteroides (strain DSM 266 / SMG 266 / 2430).